Consider the following 331-residue polypeptide: Ribosomal RNA small subunit methyltransferase C (331 aa).

Belongs to the methyltransferase superfamily. RsmC family. As to quaternary structure, monomer.

Its subcellular location is the cytoplasm. The catalysed reaction is guanosine(1207) in 16S rRNA + S-adenosyl-L-methionine = N(2)-methylguanosine(1207) in 16S rRNA + S-adenosyl-L-homocysteine + H(+). Specifically methylates the guanine in position 1207 of 16S rRNA in the 30S particle. This chain is Ribosomal RNA small subunit methyltransferase C, found in Pseudomonas putida (strain W619).